The chain runs to 840 residues: Serotype-specific mannosyltransferase WbdA (840 aa).

Residues 2 to 399 are alpha-(1-&gt;2)-mannosyltransferase; sequence HILIDVQGYQ…WANTAHLAIE (398 aa). The tract at residues 456–829 is alpha-(1-&gt;3)-mannosyltransferase; sequence KLLVDISVLA…WKQSAEFLLK (374 aa).

Belongs to the glycosyltransferase group 1 family. Glycosyltransferase 4 subfamily. In terms of assembly, monomer. Interacts with the C-terminal region of WbdD. Interacts with WbdD via a surface-exposed alpha-helix in the C-terminal mannosyltransferase domain. However, the C-terminal domain is unable to interact with WbdD in the absence of its N-terminal partner.

The protein localises to the cell inner membrane. It carries out the reaction [alpha-D-Man-(1-&gt;3)-alpha-D-Man-(1-&gt;3)-alpha-D-Man-(1-&gt;2)-alpha-D-Man-(1-&gt;2)](n)-alpha-D-Man-(1-&gt;3)-alpha-D-Man-(1-&gt;3)-alpha-D-Man-(1-&gt;3)-alpha-D-GlcNAc-di-trans,octa-cis-undecaprenyl diphosphate + 2 GDP-alpha-D-mannose = alpha-D-Man-(1-&gt;2)-alpha-D-Man-(1-&gt;2)-[alpha-D-Man-(1-&gt;3)-alpha-D-Man-(1-&gt;3)-alpha-D-Man-(1-&gt;2)-alpha-D-Man-(1-&gt;2)](n)-alpha-D-Man-(1-&gt;3)-alpha-D-Man-(1-&gt;3)-alpha-D-Man-(1-&gt;3)-alpha-D-GlcNAc-di-trans,octa-cis-undecaprenyl diphosphate + 2 GDP + 2 H(+). The enzyme catalyses alpha-D-Man-(1-&gt;2)-alpha-D-Man-(1-&gt;2)-[alpha-D-Man-(1-&gt;3)-alpha-D-Man-(1-&gt;3)-alpha-D-Man-(1-&gt;2)-alpha-D-Man-(1-&gt;2)](n)-alpha-D-Man-(1-&gt;3)-alpha-D-Man-(1-&gt;3)-alpha-D-Man-(1-&gt;3)-alpha-D-GlcNAc-di-trans,octa-cis-undecaprenyl diphosphate + 2 GDP-alpha-D-mannose = [alpha-D-Man-(1-&gt;3)-alpha-D-Man-(1-&gt;3)-alpha-D-Man-(1-&gt;2)-alpha-D-Man-(1-&gt;2)](n+1)-alpha-D-Man-(1-&gt;3)-alpha-D-Man-(1-&gt;3)-alpha-D-Man-(1-&gt;3)-alpha-D-GlcNAc-di-trans,octa-cis-undecaprenyl diphosphate + 2 GDP + 2 H(+). It functions in the pathway bacterial outer membrane biogenesis; LPS O-antigen biosynthesis. Its activity is regulated as follows. The alpha-(1-&gt;2)-mannosyltransferase activity of the N-terminal domain is regulated by the activity of the C-terminal alpha-(1-&gt;3)-mannosyltransferase. The relative concentration of WbdA and WbdD is critical in determining the O polysaccharide (OPS) modal chain length. OPS chain length increases with increasing concentration of WbdA, but the maximum length does not increase beyond the wild-type modal length, despite substantial increases in WbdA concentration. Functionally, mannosyltransferase involved in the biosynthesis of the repeat unit of the lipopolysaccharide (LPS) O-antigen region. Catalyzes the polymerization of a tetrasaccharide repeat unit containing two alpha-(1-&gt;3)- and two alpha-(1-&gt;2)-linked mannopyranose residues. Extension is terminated by the action of the chain terminator bifunctional methyltransferase/kinase WbdD. This Escherichia coli protein is Serotype-specific mannosyltransferase WbdA.